The chain runs to 932 residues: ER degradation-enhancing alpha-mannosidase-like protein 3 (932 aa).

The signal sequence occupies residues 1–41; sequence MSEAGGRGCGSPVPQRARWRLVAATAAFCLVSATSVWTAGA. A glycan (N-linked (GlcNAc...) asparagine) is linked at Asn118. Glu146 acts as the Proton donor in catalysis. Asn195 carries an N-linked (GlcNAc...) asparagine glycan. Residue Asp293 is part of the active site. The active-site Proton donor is the Glu387. Glu405 is a catalytic residue. Thr491 lines the Ca(2+) pocket. N-linked (GlcNAc...) asparagine glycans are attached at residues Asn504 and Asn511. Residues 674-779 form the PA domain; it reads LSKHKETRGF…KEGSIILDAI (106 aa). The segment covering 790–799 has biased composition (basic and acidic residues); that stretch reads SDKAKDRDPE. The disordered stretch occupies residues 790–908; the sequence is SDKAKDRDPE…PNVSWGKKVQ (119 aa). Asn810 and Asn814 each carry an N-linked (GlcNAc...) asparagine glycan. Over residues 812–825 the composition is skewed to low complexity; sequence SQNQSGEQISSSSQ. The segment covering 856–890 has biased composition (polar residues); the sequence is ASISPSEQTSNPTENHETTNLNGECTDLDNQLQEQ. Asn900 is a glycosylation site (N-linked (GlcNAc...) asparagine). The Prevents secretion from ER motif lies at 929–932; that stretch reads KDEL.

This sequence belongs to the glycosyl hydrolase 47 family. Requires Ca(2+) as cofactor.

The protein resides in the endoplasmic reticulum lumen. It carries out the reaction N(4)-(alpha-D-Man-(1-&gt;2)-alpha-D-Man-(1-&gt;2)-alpha-D-Man-(1-&gt;3)-[alpha-D-Man-(1-&gt;2)-alpha-D-Man-(1-&gt;3)-[alpha-D-Man-(1-&gt;2)-alpha-D-Man-(1-&gt;6)]-alpha-D-Man-(1-&gt;6)]-beta-D-Man-(1-&gt;4)-beta-D-GlcNAc-(1-&gt;4)-beta-D-GlcNAc)-L-asparaginyl-[protein] (N-glucan mannose isomer 9A1,2,3B1,2,3) + 4 H2O = N(4)-(alpha-D-Man-(1-&gt;3)-[alpha-D-Man-(1-&gt;3)-[alpha-D-Man-(1-&gt;6)]-alpha-D-Man-(1-&gt;6)]-beta-D-Man-(1-&gt;4)-beta-D-GlcNAc-(1-&gt;4)-beta-D-GlcNAc)-L-asparaginyl-[protein] (N-glucan mannose isomer 5A1,2) + 4 beta-D-mannose. The catalysed reaction is N(4)-(alpha-D-Man-(1-&gt;2)-alpha-D-Man-(1-&gt;2)-alpha-D-Man-(1-&gt;3)-[alpha-D-Man-(1-&gt;3)-[alpha-D-Man-(1-&gt;2)-alpha-D-Man-(1-&gt;6)]-alpha-D-Man-(1-&gt;6)]-beta-D-Man-(1-&gt;4)-beta-D-GlcNAc-(1-&gt;4)-beta-D-GlcNAc)-L-asparaginyl-[protein] (N-glucan mannose isomer 8A1,2,3B1,3) + 3 H2O = N(4)-(alpha-D-Man-(1-&gt;3)-[alpha-D-Man-(1-&gt;3)-[alpha-D-Man-(1-&gt;6)]-alpha-D-Man-(1-&gt;6)]-beta-D-Man-(1-&gt;4)-beta-D-GlcNAc-(1-&gt;4)-beta-D-GlcNAc)-L-asparaginyl-[protein] (N-glucan mannose isomer 5A1,2) + 3 beta-D-mannose. It participates in protein modification; protein glycosylation. Functionally, involved in endoplasmic reticulum-associated degradation (ERAD). Accelerates the glycoprotein ERAD by proteasomes, by catalyzing mannose trimming from Man8GlcNAc2 to Man7GlcNAc2 in the N-glycans. May also participate in mannose trimming from all glycoproteins and not just misfolded ones targeted to ERAD. May have alpha 1,2-mannosidase activity. The protein is ER degradation-enhancing alpha-mannosidase-like protein 3 (EDEM3) of Homo sapiens (Human).